The chain runs to 323 residues: UDP-glucuronate 4-epimerase (323 aa).

An NAD(+)-binding site is contributed by 11 to 13; it reads GFI. The active-site Proton acceptor is tyrosine 152. NAD(+) is bound at residue lysine 156.

It belongs to the NAD(P)-dependent epimerase/dehydratase family. NAD(+) is required as a cofactor.

The enzyme catalyses UDP-alpha-D-glucuronate = UDP-alpha-D-galacturonate. Catalyzes the interconversion of UDP-D-glucuronic acid (UDP-GlcA) and UDP-D-galacturonic acid (UDP-GalA). The chain is UDP-glucuronate 4-epimerase from Thermodesulfobacterium geofontis (strain OPF15).